The following is a 56-amino-acid chain: uncharacterized protein (56 aa).

A disordered region spans residues 15–56 (SIGNISSGNINNSIGNSSSSGCDDVFNNSTNNNNNNNNNNNK).

This is an uncharacterized protein from Dictyostelium discoideum (Social amoeba).